A 550-amino-acid chain; its full sequence is Hydroxylamine reductase (550 aa).

[2Fe-2S] cluster contacts are provided by Cys-3, Cys-6, Cys-18, and Cys-25. Positions 249, 273, 317, 405, 433, 458, 492, and 494 each coordinate hybrid [4Fe-2O-2S] cluster. A Cysteine persulfide modification is found at Cys-405.

This sequence belongs to the HCP family. [2Fe-2S] cluster is required as a cofactor. Requires hybrid [4Fe-2O-2S] cluster as cofactor.

The protein localises to the cytoplasm. The catalysed reaction is A + NH4(+) + H2O = hydroxylamine + AH2 + H(+). Its function is as follows. Catalyzes the reduction of hydroxylamine to form NH(3) and H(2)O. This is Hydroxylamine reductase from Salmonella enteritidis PT4 (strain P125109).